The chain runs to 135 residues: Protein PsiE homolog (135 aa).

Transmembrane regions (helical) follow at residues 14–34 (LQTI…IFLV), 54–74 (YQLI…ALIV), 82–102 (HFPL…LIIV), and 107–127 (PSDT…LYLA).

The protein belongs to the PsiE family.

Its subcellular location is the cell inner membrane. The polypeptide is Protein PsiE homolog (Pectobacterium atrosepticum (strain SCRI 1043 / ATCC BAA-672) (Erwinia carotovora subsp. atroseptica)).